A 385-amino-acid polypeptide reads, in one-letter code: Proliferation-associated protein A (385 aa).

The protein belongs to the peptidase M24 family.

This chain is Proliferation-associated protein A (prlA), found in Dictyostelium discoideum (Social amoeba).